The chain runs to 105 residues: Transmembrane protein 273 (105 aa).

Positions 1-19 are cleaved as a signal peptide; that stretch reads MNLGVSMLRILFLLDVGGA. The Extracellular portion of the chain corresponds to 20-38; the sequence is QVLATGKTPGAEIDFKYAL. The helical transmembrane segment at 39–59 threads the bilayer; it reads IGTAVGVAISAGFLALKICMI. The Cytoplasmic segment spans residues 60–105; that stretch reads RRHLFDDDSSDLKSTPGGLSDTIPLKKRAPRRNHNFSKRDAQVIEL.

Its subcellular location is the membrane. This is Transmembrane protein 273 from Homo sapiens (Human).